We begin with the raw amino-acid sequence, 664 residues long: Chaperone protein DnaK (664 aa).

Threonine 201 carries the post-translational modification Phosphothreonine; by autocatalysis. Disordered stretches follow at residues 516-538 (DAEKHKEEDKKRREASDARNEAD) and 578-664 (APVE…KPND). A compositionally biased stretch (basic and acidic residues) spans 578-592 (APVEKIKDASEELSR). Low complexity-rich tracts occupy residues 600–617 (AMQSQSASAAASSAANAQ) and 638–649 (AGNSASSNSNNE).

This sequence belongs to the heat shock protein 70 family.

Acts as a chaperone. The polypeptide is Chaperone protein DnaK (Chlamydia caviae (strain ATCC VR-813 / DSM 19441 / 03DC25 / GPIC) (Chlamydophila caviae)).